Here is a 250-residue protein sequence, read N- to C-terminus: Agamous-like MADS-box protein AGL8 homolog (250 aa).

In terms of domain architecture, MADS-box spans 3–57; it reads RGRVQLKRIENKINRQVTFSKRRSGLLKKAHEISVLCDAEVGLIVFSTKGKLFEY. The region spanning 88 to 178 is the K-box domain; sequence PGSWTLEHAK…SKKVKEREKE (91 aa).

Abundant in vegetative organs.

Its subcellular location is the nucleus. Probable transcription factor. The chain is Agamous-like MADS-box protein AGL8 homolog from Solanum tuberosum (Potato).